Reading from the N-terminus, the 316-residue chain is Transaldolase (316 aa).

Lys-132 acts as the Schiff-base intermediate with substrate in catalysis.

This sequence belongs to the transaldolase family. Type 1 subfamily. Homodimer.

It localises to the cytoplasm. It carries out the reaction D-sedoheptulose 7-phosphate + D-glyceraldehyde 3-phosphate = D-erythrose 4-phosphate + beta-D-fructose 6-phosphate. The protein operates within carbohydrate degradation; pentose phosphate pathway; D-glyceraldehyde 3-phosphate and beta-D-fructose 6-phosphate from D-ribose 5-phosphate and D-xylulose 5-phosphate (non-oxidative stage): step 2/3. In terms of biological role, transaldolase is important for the balance of metabolites in the pentose-phosphate pathway. The chain is Transaldolase from Marinomonas sp. (strain MWYL1).